The sequence spans 739 residues: ABC transporter G family member 20 (739 aa).

The 264-residue stretch at 88 to 351 folds into the ABC transporter domain; it reads LSFKDLTYSV…FSEFGHPIPE (264 aa). 144–151 serves as a coordination point for ATP; sequence GASGSGKS. One can recognise an ABC transmembrane type-2 domain in the interval 433–643; the sequence is TEMLVIGKRS…PYEGVLQNEF (211 aa). A run of 6 helical transmembrane segments spans residues 452–472, 487–507, 528–548, 563–583, 593–613, and 712–732; these read LFGI…TIFW, FFAF…PVFL, VLAH…AFAA, FLFF…FVTF, IGFT…GFFI, and LWIT…TLLI.

The protein belongs to the ABC transporter superfamily. ABCG family. Eye pigment precursor importer (TC 3.A.1.204) subfamily.

The protein localises to the membrane. The polypeptide is ABC transporter G family member 20 (ABCG20) (Arabidopsis thaliana (Mouse-ear cress)).